A 44-amino-acid polypeptide reads, in one-letter code: Large ribosomal subunit protein bL34 (44 aa).

It belongs to the bacterial ribosomal protein bL34 family.

In Variovorax paradoxus (strain S110), this protein is Large ribosomal subunit protein bL34.